The chain runs to 129 residues: Iron-sulfur cluster assembly 1 homolog, mitochondrial (129 aa).

The transit peptide at 1–12 directs the protein to the mitochondrion; it reads MASSVVRATVRA. Fe cation contacts are provided by cysteine 57, cysteine 121, and cysteine 123.

It belongs to the HesB/IscA family.

Its subcellular location is the mitochondrion. Its function is as follows. Involved in the maturation of mitochondrial 4Fe-4S proteins functioning late in the iron-sulfur cluster assembly pathway. Probably involved in the binding of an intermediate of Fe/S cluster assembly. The chain is Iron-sulfur cluster assembly 1 homolog, mitochondrial (ISCA1) from Gallus gallus (Chicken).